An 834-amino-acid polypeptide reads, in one-letter code: MAP kinase phosphatase with leucine-rich repeats protein 1 (834 aa).

The interval 1–103 is disordered; the sequence is MIFKKLFSKG…GSGTTKESKK (103 aa). Over residues 36–78 the composition is skewed to low complexity; the sequence is GSGTNTNGLSNSTTNPSSIHSTPTTPTTTASTNLTNSNKLSTL. Polar residues predominate over residues 79–98; that stretch reads APITNGNRSLRGSKDGSGTT. LRR repeat units lie at residues 160-181, 183-204, 206-226, 229-251, 252-273, 274-292, 298-319, 321-342, 345-366, and 368-389; these read ELRSLILDFNKITEIPEQIGLL, NLKHLSLAANQLSQVPEFLSQL, SLESLELGINQFTSFPLNICK, SLTLLRLETNNIKSLPDDFINLE, NLKDLSLLDNQLKEIPDSLPNN, IEKLNLGCNDIINSYSKSL, SLTTLNLSENKIEVLDESLSCL, NVKTLILDCNMIKVIPGSVLGS, SLVTLNLPHNFISDLPAEIVTL, and NLRIIDLRGNNFEFCKNYPSSE. A disordered region spans residues 503–584; sequence YEKQENDENN…ENPLKESQGK (82 aa). The span at 511 to 536 shows a compositional bias: polar residues; that stretch reads NNSVTLETTTTISIASDNTDEASIQI. Basic and acidic residues-rich tracts occupy residues 538–554 and 569–582; these read QKEDGDKENLENDDKLL and KQQEQQENPLKESQ. A coiled-coil region spans residues 555–615; the sequence is QESFSENNNN…IRLEKIKYQE (61 aa). A Tyrosine-protein phosphatase domain is found at 695–834; that stretch reads VPDLIIDKLY…LKKFEKDLSK (140 aa). Catalysis depends on C778, which acts as the Phosphocysteine intermediate.

It belongs to the protein-tyrosine phosphatase family. Non-receptor class dual specificity subfamily.

The catalysed reaction is O-phospho-L-tyrosyl-[protein] + H2O = L-tyrosyl-[protein] + phosphate. The enzyme catalyses O-phospho-L-seryl-[protein] + H2O = L-seryl-[protein] + phosphate. It catalyses the reaction O-phospho-L-threonyl-[protein] + H2O = L-threonyl-[protein] + phosphate. Probable phosphatase with dual specificity toward Ser/Thr and Tyr-containing proteins. Dephosphorylates pNPP, in vitro. Essential for proper regulation of erkB (erk2) and optimal motility during development. The sequence is that of MAP kinase phosphatase with leucine-rich repeats protein 1 (mpl1) from Dictyostelium discoideum (Social amoeba).